We begin with the raw amino-acid sequence, 316 residues long: Polyprenyl transferase ausN (316 aa).

The next 9 membrane-spanning stretches (helical) occupy residues 45–65, 69–89, 108–128, 129–149, 163–183, 188–208, 233–253, 256–276, and 296–316; these read VVGVAYTAAISPVTLPATFLL, VILSLWGFCIRSAGCAWNDLI, GAVSPSGAALLTAFMFGCGGS, LLLLLPSQCAFEAAIVVFFAL, LILTNIAWAIPMAMSSLDMNP, IPTLAMSFSIASVIVMIDIVY, DQIAYSLFFSGTLSLLAGGIL, LGIPFLIFSVGGHFVGFLRFL, and SCLLATVFLVFGLFFEYCVRL.

It belongs to the UbiA prenyltransferase family. Mg(2+) serves as cofactor.

Its subcellular location is the membrane. It carries out the reaction 3,5-dimethylorsellinate + (2E,6E)-farnesyl diphosphate = (3R)-3-farnesyl-6-hydroxy-2,3,5-trimethyl-4-oxocyclohexa-1,5-diene-1-carboxylate + diphosphate + H(+). The protein operates within secondary metabolite biosynthesis; terpenoid biosynthesis. In terms of biological role, polyprenyl transferase; part of the gene cluster A that mediates the biosynthesis of the fungal meroterpenoid acetoxydehydroaustin. The first step of the pathway is the synthesis of 3,5-dimethylorsellinic acid by the polyketide synthase ausA. 3,5-dimethylorsellinic acid is then prenylated by the polyprenyl transferase ausN. Further epoxidation by the FAD-dependent monooxygenase ausM and cyclization by the probable terpene cyclase ausL lead to the formation of protoaustinoid A. Protoaustinoid A is then oxidized to spiro-lactone preaustinoid A3 by the combined action of the FAD-binding monooxygenases ausB and ausC, and the dioxygenase ausE. Acid-catalyzed keto-rearrangement and ring contraction of the tetraketide portion of preaustinoid A3 by ausJ lead to the formation of preaustinoid A4. The aldo-keto reductase ausK, with the help of ausH, is involved in the next step by transforming preaustinoid A4 into isoaustinone which is in turn hydroxylated by the P450 monooxygenase ausI to form austinolide. The cytochrome P450 monooxygenase ausG then modifies austinolide to austinol. Austinol is further acetylated to austin by the O-acetyltransferase ausP, which spontaneously changes to dehydroaustin. The cytochrome P450 monooxygenase then converts dehydroaustin is into 7-dehydrodehydroaustin. The hydroxylation catalyzed by ausR permits the second O-acetyltransferase ausQ to add an additional acetyl group to the molecule, leading to the formation of acetoxydehydroaustin. Due to genetic rearrangements of the clusters and the subsequent loss of some enzymes, the end product of the Penicillium brasilianum austinoid biosynthesis clusters is acetoxydehydroaustin. This chain is Polyprenyl transferase ausN, found in Penicillium brasilianum.